Consider the following 234-residue polypeptide: Large ribosomal subunit protein uL1 (234 aa).

This sequence belongs to the universal ribosomal protein uL1 family. As to quaternary structure, part of the 50S ribosomal subunit.

Binds directly to 23S rRNA. The L1 stalk is quite mobile in the ribosome, and is involved in E site tRNA release. Functionally, protein L1 is also a translational repressor protein, it controls the translation of the L11 operon by binding to its mRNA. In Escherichia coli (strain 55989 / EAEC), this protein is Large ribosomal subunit protein uL1.